Consider the following 554-residue polypeptide: Zinc finger protein syd-9 (554 aa).

3 C2H2-type zinc fingers span residues 20–43 (LTCPQCPKSFSSTKLLQQHQQMFH), 65–87 (FICETCGKAFRFRSNLAEHRSVH), and 93–116 (YVCKFCGKSSRLKGNLTKHILKHH). Disordered stretches follow at residues 136–158 (KIVTKDNGPTTNGSTPTTSTATP), 298–319 (SPDTVQSDHSDDFEQDSPPPMA), and 342–383 (ASGQ…CPSP). A compositionally biased stretch (low complexity) spans 142–158 (NGPTTNGSTPTTSTATP). Polar residues-rich tracts occupy residues 351-360 (PDSTDTQKGC) and 370-379 (SDPSTSSGDS). A C2H2-type 4 zinc finger spans residues 387-410 (LHCKECGTLVRKSSHLPIHMTMSH). The segment at 516 to 554 (RMEMSLSPIKPFQQRFSRERSSSSSVERSPSRERSRSPL) is disordered. The segment covering 544–554 (SPSRERSRSPL) has biased composition (basic and acidic residues).

As to expression, expressed mainly in body wall muscles and ventral cord motoneurons.

It localises to the nucleus. It is found in the nucleus speckle. Plays a role in regulating synaptic function, probably by modulation of endocytosis. May be dispensable in muscle for normal locomotion. May be involved in post-transcriptional mRNA processing, in parallel with unc-75. This is Zinc finger protein syd-9 from Caenorhabditis elegans.